The chain runs to 388 residues: Mannitol-1-phosphate 5-dehydrogenase (388 aa).

5–16 (AVHFGGGNIGRG) contributes to the NAD(+) binding site. K213 is an active-site residue.

This sequence belongs to the mannitol dehydrogenase family. Monomer.

It carries out the reaction D-mannitol 1-phosphate + NAD(+) = beta-D-fructose 6-phosphate + NADH + H(+). Functionally, catalyzes the NAD(H)-dependent interconversion of D-fructose 6-phosphate and D-mannitol 1-phosphate in the mannitol metabolic pathway. The protein is Mannitol-1-phosphate 5-dehydrogenase of Coccidioides immitis (strain RS) (Valley fever fungus).